Consider the following 270-residue polypeptide: L-cystine-binding protein TcyK (270 aa).

The N-terminal stretch at 1 to 20 is a signal peptide; it reads MKTKTAFMAILFSLITVLSA. A lipid anchor (N-palmitoyl cysteine) is attached at cysteine 21. Cysteine 21 carries the S-diacylglycerol cysteine lipid modification.

The protein belongs to the bacterial solute-binding protein 3 family. As to quaternary structure, the complex is composed of two ATP-binding proteins (TcyN), two transmembrane proteins (TcyL and TcyM) and two solute-binding proteins (TcyJ and TcyK).

The protein resides in the cell membrane. Part of the ABC transporter complex TcyJKLMN involved in L-cystine import. Is also involved in cystathionine, djenkolate, and S-methylcysteine transport. This is L-cystine-binding protein TcyK (tcyK) from Bacillus subtilis (strain 168).